The chain runs to 653 residues: Epithelial sodium channel subunit gamma (653 aa).

At M1 to W54 the chain is on the cytoplasmic side. A helical transmembrane segment spans residues I55–L75. Topologically, residues M76–C546 are extracellular. Cystine bridges form between C100–C290, C214–C221, C267–C274, C379–C464, C401–C460, C405–C456, C414–C441, and C416–C430. The chain crosses the membrane as a helical span at residues S547–A567. The Cytoplasmic portion of the chain corresponds to R568 to N653. The tract at residues K582–D608 is disordered.

Belongs to the amiloride-sensitive sodium channel (TC 1.A.6) family. SCNN1G subfamily. In terms of assembly, component of the heterotrimeric epithelial sodium channel (ENaC) composed of an alpha/SCNN1A, a beta/SCNN1B and a gamma/SCNN1G subunit. Strongly expressed in gill, liver, kidney and rectum and more weakly in heart, muscle and intestine.

The protein resides in the apical cell membrane. It catalyses the reaction Na(+)(in) = Na(+)(out). Its activity is regulated as follows. Originally identified and characterized by its inhibition by the diuretic drug amiloride. In terms of biological role, this is one of the three pore-forming subunits of the heterotrimeric epithelial sodium channel (ENaC), a critical regulator of sodium balance and fluid homeostasis. ENaC operates in epithelial tissues, where it mediates the electrodiffusion of sodium ions from extracellular fluid through the apical membrane of cells, with water following osmotically. This chain is Epithelial sodium channel subunit gamma, found in Neoceratodus forsteri (Australian lungfish).